Reading from the N-terminus, the 155-residue chain is NADPH-dependent 7-cyano-7-deazaguanine reductase (155 aa).

The Thioimide intermediate role is filled by Cys53. Asp60 serves as the catalytic Proton donor. Substrate contacts are provided by residues 75-77 (VES) and 94-95 (HE).

Belongs to the GTP cyclohydrolase I family. QueF type 1 subfamily.

Its subcellular location is the cytoplasm. The catalysed reaction is 7-aminomethyl-7-carbaguanine + 2 NADP(+) = 7-cyano-7-deazaguanine + 2 NADPH + 3 H(+). The protein operates within tRNA modification; tRNA-queuosine biosynthesis. Its function is as follows. Catalyzes the NADPH-dependent reduction of 7-cyano-7-deazaguanine (preQ0) to 7-aminomethyl-7-deazaguanine (preQ1). The polypeptide is NADPH-dependent 7-cyano-7-deazaguanine reductase (Ruegeria pomeroyi (strain ATCC 700808 / DSM 15171 / DSS-3) (Silicibacter pomeroyi)).